Here is a 103-residue protein sequence, read N- to C-terminus: Defensin-like protein 289 (103 aa).

An N-terminal signal peptide occupies residues 1 to 29; that stretch reads MATLKTTIFIIFILYISCTMFVNIFRVQA. 6 disulfides stabilise this stretch: Cys33-Cys50, Cys39-Cys55, Cys43-Cys57, Cys72-Cys92, Cys78-Cys98, and Cys84-Cys100.

The protein belongs to the DEFL family.

Its subcellular location is the secreted. This is Defensin-like protein 289 from Arabidopsis thaliana (Mouse-ear cress).